Consider the following 178-residue polypeptide: Peptide deformylase (178 aa).

Positions 102 and 144 each coordinate Fe cation. Glu145 is a catalytic residue. His148 contacts Fe cation.

The protein belongs to the polypeptide deformylase family. It depends on Fe(2+) as a cofactor.

The catalysed reaction is N-terminal N-formyl-L-methionyl-[peptide] + H2O = N-terminal L-methionyl-[peptide] + formate. Functionally, removes the formyl group from the N-terminal Met of newly synthesized proteins. Requires at least a dipeptide for an efficient rate of reaction. N-terminal L-methionine is a prerequisite for activity but the enzyme has broad specificity at other positions. In Leptospira borgpetersenii serovar Hardjo-bovis (strain JB197), this protein is Peptide deformylase.